We begin with the raw amino-acid sequence, 424 residues long: UPF0229 protein PC1_1960 (424 aa).

The segment at 46-109 is disordered; sequence IESGESVSIP…GQGDASKDGE (64 aa). Over residues 77 to 90 the composition is skewed to basic and acidic residues; sequence PGNDHFVQNDKIER. Positions 92–101 are enriched in gly residues; that stretch reads QGGGGGGSGQ.

It belongs to the UPF0229 family.

This is UPF0229 protein PC1_1960 from Pectobacterium carotovorum subsp. carotovorum (strain PC1).